A 313-amino-acid polypeptide reads, in one-letter code: Endo-beta-N-acetylglucosaminidase H (313 aa).

Positions Met1–Pro42 form a signal peptide, or 44. The GH18 domain occupies Pro51–Ser307. Residue Glu174 is the Proton donor of the active site.

It belongs to the glycosyl hydrolase 18 family.

The enzyme catalyses an N(4)-(oligosaccharide-(1-&gt;3)-[oligosaccharide-(1-&gt;6)]-beta-D-Man-(1-&gt;4)-beta-D-GlcNAc-(1-&gt;4)-alpha-D-GlcNAc)-L-asparaginyl-[protein] + H2O = an oligosaccharide-(1-&gt;3)-[oligosaccharide-(1-&gt;6)]-beta-D-Man-(1-&gt;4)-D-GlcNAc + N(4)-(N-acetyl-beta-D-glucosaminyl)-L-asparaginyl-[protein]. Cleaves asparagine-linked oligomannose and hybrid, but not complex, oligosaccharides from glycoproteins. The chain is Endo-beta-N-acetylglucosaminidase H from Streptomyces plicatus.